Reading from the N-terminus, the 88-residue chain is Apolipoprotein C-I (88 aa).

The N-terminal stretch at 1 to 26 (MRLFIALPVLIVVVAMALEGPAPAQA) is a signal peptide.

The protein belongs to the apolipoprotein C1 family.

Its subcellular location is the secreted. Its function is as follows. Inhibitor of lipoprotein binding to the low density lipoprotein (LDL) receptor, LDL receptor-related protein, and very low density lipoprotein (VLDL) receptor. Associates with high density lipoproteins (HDL) and the triacylglycerol-rich lipoproteins in the plasma and makes up about 10% of the protein of the VLDL and 2% of that of HDL. Appears to interfere directly with fatty acid uptake and is also the major plasma inhibitor of cholesteryl ester transfer protein (CETP). Modulates the interaction of APOE with beta-migrating VLDL and inhibits binding of beta-VLDL to the LDL receptor-related protein. Binds free fatty acids and reduces their intracellular esterification. The protein is Apolipoprotein C-I (Apoc1) of Grammomys surdaster (African woodland thicket rat).